A 253-amino-acid polypeptide reads, in one-letter code: Ubiquinone/menaquinone biosynthesis C-methyltransferase UbiE (253 aa).

Residues Thr76, Asp97, and 125–126 contribute to the S-adenosyl-L-methionine site; that span reads NA.

The protein belongs to the class I-like SAM-binding methyltransferase superfamily. MenG/UbiE family.

The catalysed reaction is a 2-demethylmenaquinol + S-adenosyl-L-methionine = a menaquinol + S-adenosyl-L-homocysteine + H(+). The enzyme catalyses a 2-methoxy-6-(all-trans-polyprenyl)benzene-1,4-diol + S-adenosyl-L-methionine = a 5-methoxy-2-methyl-3-(all-trans-polyprenyl)benzene-1,4-diol + S-adenosyl-L-homocysteine + H(+). Its pathway is quinol/quinone metabolism; menaquinone biosynthesis; menaquinol from 1,4-dihydroxy-2-naphthoate: step 2/2. It functions in the pathway cofactor biosynthesis; ubiquinone biosynthesis. Functionally, methyltransferase required for the conversion of demethylmenaquinol (DMKH2) to menaquinol (MKH2) and the conversion of 2-polyprenyl-6-methoxy-1,4-benzoquinol (DDMQH2) to 2-polyprenyl-3-methyl-6-methoxy-1,4-benzoquinol (DMQH2). The chain is Ubiquinone/menaquinone biosynthesis C-methyltransferase UbiE from Stenotrophomonas maltophilia (strain R551-3).